The primary structure comprises 371 residues: Queuine tRNA-ribosyltransferase (371 aa).

Catalysis depends on Asp-89, which acts as the Proton acceptor. Substrate is bound by residues 89 to 93, Asp-143, Gln-185, and Gly-212; that span reads DSGGF. The interval 243–249 is RNA binding; it reads GVGTPED. The active-site Nucleophile is the Asp-262. The tract at residues 267–271 is RNA binding; important for wobble base 34 recognition; that stretch reads TRNAR. Residues Cys-300, Cys-302, Cys-305, and His-331 each contribute to the Zn(2+) site.

It belongs to the queuine tRNA-ribosyltransferase family. In terms of assembly, homodimer. Within each dimer, one monomer is responsible for RNA recognition and catalysis, while the other monomer binds to the replacement base PreQ1. Zn(2+) serves as cofactor.

The catalysed reaction is 7-aminomethyl-7-carbaguanine + guanosine(34) in tRNA = 7-aminomethyl-7-carbaguanosine(34) in tRNA + guanine. It functions in the pathway tRNA modification; tRNA-queuosine biosynthesis. In terms of biological role, catalyzes the base-exchange of a guanine (G) residue with the queuine precursor 7-aminomethyl-7-deazaguanine (PreQ1) at position 34 (anticodon wobble position) in tRNAs with GU(N) anticodons (tRNA-Asp, -Asn, -His and -Tyr). Catalysis occurs through a double-displacement mechanism. The nucleophile active site attacks the C1' of nucleotide 34 to detach the guanine base from the RNA, forming a covalent enzyme-RNA intermediate. The proton acceptor active site deprotonates the incoming PreQ1, allowing a nucleophilic attack on the C1' of the ribose to form the product. After dissociation, two additional enzymatic reactions on the tRNA convert PreQ1 to queuine (Q), resulting in the hypermodified nucleoside queuosine (7-(((4,5-cis-dihydroxy-2-cyclopenten-1-yl)amino)methyl)-7-deazaguanosine). In Nitrosomonas europaea (strain ATCC 19718 / CIP 103999 / KCTC 2705 / NBRC 14298), this protein is Queuine tRNA-ribosyltransferase.